The chain runs to 240 residues: LOB domain-containing protein 39 (240 aa).

The LOB domain occupies 1-107 (MSCNGCRVLR…VETVLRGGTL (107 aa)). The tract at residues 200–233 (GDRPGSPSEESVTTSCWENGMRGDNKQKRNKGEK) is disordered. Residues 207–216 (SEESVTTSCW) show a composition bias toward polar residues.

This sequence belongs to the LOB domain-containing protein family. Expressed in young shoots, roots, stems, leaves and flowers.

The chain is LOB domain-containing protein 39 (LBD39) from Arabidopsis thaliana (Mouse-ear cress).